We begin with the raw amino-acid sequence, 210 residues long: DNA dC-&gt;dU-editing enzyme APOBEC-3H (210 aa).

The region spanning 4 to 126 (LTAKTFSLQF…PNYQEGLLLL (123 aa)) is the CMP/dCMP-type deaminase domain. His-54 is a binding site for Zn(2+). The active-site Proton donor is Glu-56. Cys-85 and Cys-88 together coordinate Zn(2+). A necessary and sufficient for localization to the cytoplasm region spans residues 182–210 (SRSVDVLENGLRSLQLGPVTPSSSIRNSR).

It belongs to the cytidine and deoxycytidylate deaminase family. As to quaternary structure, homodimer. The cofactor is Zn(2+).

It is found in the cytoplasm. The catalysed reaction is a 2'-deoxycytidine in single-stranded DNA + H2O + H(+) = a 2'-deoxyuridine in single-stranded DNA + NH4(+). Antiviral activity is neutralized by the simian immunodeficiency virus rhesus (SIV-mac) virion infectivity factor (VIF). DNA deaminase (cytidine deaminase) which acts as an inhibitor of retrovirus replication and retrotransposon mobility via deaminase-dependent and -independent mechanisms. Exhibits antiviral activity against vif-deficient HIV-1. After the penetration of retroviral nucleocapsids into target cells of infection and the initiation of reverse transcription, it can induce the conversion of cytosine to uracil in the minus-sense single-strand viral DNA, leading to G-to-A hypermutations in the subsequent plus-strand viral DNA. The resultant detrimental levels of mutations in the proviral genome, along with a deamination-independent mechanism that works prior to the proviral integration, together exert efficient antiretroviral effects in infected target cells. Selectively targets single-stranded DNA and does not deaminate double-stranded DNA or single- or double-stranded RNA. In Macaca mulatta (Rhesus macaque), this protein is DNA dC-&gt;dU-editing enzyme APOBEC-3H.